A 500-amino-acid polypeptide reads, in one-letter code: L-arabinose isomerase (500 aa).

4 residues coordinate Mn(2+): Glu-306, Glu-333, His-349, and His-448.

This sequence belongs to the arabinose isomerase family. Mn(2+) is required as a cofactor.

It catalyses the reaction beta-L-arabinopyranose = L-ribulose. It participates in carbohydrate degradation; L-arabinose degradation via L-ribulose; D-xylulose 5-phosphate from L-arabinose (bacterial route): step 1/3. In terms of biological role, catalyzes the conversion of L-arabinose to L-ribulose. The protein is L-arabinose isomerase of Shewanella sp. (strain MR-7).